The sequence spans 219 residues: Ribonuclease HII (219 aa).

One can recognise an RNase H type-2 domain in the interval 22–219 (GLVAGVDEVG…LLAMRMEAVV (198 aa)). Residues aspartate 28, glutamate 29, and aspartate 125 each coordinate a divalent metal cation.

Belongs to the RNase HII family. The cofactor is Mn(2+). It depends on Mg(2+) as a cofactor.

The protein localises to the cytoplasm. It carries out the reaction Endonucleolytic cleavage to 5'-phosphomonoester.. In terms of biological role, endonuclease that specifically degrades the RNA of RNA-DNA hybrids. This Granulibacter bethesdensis (strain ATCC BAA-1260 / CGDNIH1) protein is Ribonuclease HII.